Consider the following 192-residue polypeptide: Fumarylpyruvate hydrolase (192 aa).

A divalent metal cation contacts are provided by Glu-41, Glu-43, and Asp-72.

This sequence belongs to the FAH family. It depends on Mg(2+) as a cofactor. Requires Mn(2+) as cofactor.

The enzyme catalyses 3-fumarylpyruvate + H2O = fumarate + pyruvate + H(+). The protein operates within aromatic compound metabolism; naphthalene degradation. Involved in the catabolism of gentisate (2,5-dihydroxybenzoate) a key intermediates in the aerobic pathways for the metabolism of a large number of aromatic compoun such as naphthalene. Catalyzes the hydrolytic cleavage of fumarylpyruvate to form fumarate and pyruvate. The sequence is that of Fumarylpyruvate hydrolase from Ralstonia sp.